A 465-amino-acid chain; its full sequence is MAP kinase-interacting serine/threonine-protein kinase 1 (465 aa).

The span at 1–11 (MVSSQKLEKPI) shows a compositional bias: basic and acidic residues. A disordered region spans residues 1-40 (MVSSQKLEKPIEMGSSEPLPIADGDRRRKKKRRGRATDSL). Serine 39 is modified (phosphoserine). In terms of domain architecture, Protein kinase spans 49–374 (KLTSELLGEG…AAQVLQHPWV (326 aa)). Residues 55–63 (LGEGAYAKV) and lysine 78 each bind ATP. Residues 185–203 (APTSLGSSDPPTSASQVAG) show a composition bias toward polar residues. The interval 185–204 (APTSLGSSDPPTSASQVAGT) is disordered. The active-site Proton acceptor is aspartate 211. Phosphoserine occurs at positions 221 and 226. Residues threonine 250, threonine 255, and threonine 385 each carry the phosphothreonine modification. A disordered region spans residues 446 to 465 (RRRALAQAGRGEDRSPPTAL). Residues 455–465 (RGEDRSPPTAL) show a composition bias toward basic and acidic residues. Serine 460 carries the phosphoserine modification.

This sequence belongs to the protein kinase superfamily. CAMK Ser/Thr protein kinase family. As to quaternary structure, interacts with the C-terminal regions of EIF4G1 and EIF4G2. Also binds to dephosphorylated ERK1 and ERK2, and to the p38 kinases. Mg(2+) is required as a cofactor. Post-translationally, dual phosphorylation of Thr-250 and Thr-255 activates the kinase. Phosphorylation of Thr-385 activates the kinase. MAPK3/ERK1 is one of the kinases which activate MKNK1/MNK1. Phosphorylation by PAK2 leads to a reduced phosphorylation of EIF4G1. As to expression, ubiquitous.

The protein resides in the cytoplasm. It localises to the nucleus. It carries out the reaction L-seryl-[protein] + ATP = O-phospho-L-seryl-[protein] + ADP + H(+). The enzyme catalyses L-threonyl-[protein] + ATP = O-phospho-L-threonyl-[protein] + ADP + H(+). Phosphorylated and activated by the p38 kinases and kinases in the Erk pathway. May play a role in the response to environmental stress and cytokines. Appears to regulate translation by phosphorylating EIF4E, thus increasing the affinity of this protein for the 7-methylguanosine-containing mRNA cap. The polypeptide is MAP kinase-interacting serine/threonine-protein kinase 1 (MKNK1) (Homo sapiens (Human)).